Consider the following 282-residue polypeptide: ATP phosphoribosyltransferase (282 aa).

This sequence belongs to the ATP phosphoribosyltransferase family. Long subfamily. It depends on Mg(2+) as a cofactor.

It is found in the cytoplasm. The catalysed reaction is 1-(5-phospho-beta-D-ribosyl)-ATP + diphosphate = 5-phospho-alpha-D-ribose 1-diphosphate + ATP. The protein operates within amino-acid biosynthesis; L-histidine biosynthesis; L-histidine from 5-phospho-alpha-D-ribose 1-diphosphate: step 1/9. With respect to regulation, feedback inhibited by histidine. Catalyzes the condensation of ATP and 5-phosphoribose 1-diphosphate to form N'-(5'-phosphoribosyl)-ATP (PR-ATP). Has a crucial role in the pathway because the rate of histidine biosynthesis seems to be controlled primarily by regulation of HisG enzymatic activity. This is ATP phosphoribosyltransferase from Halobacterium salinarum (strain ATCC 29341 / DSM 671 / R1).